The primary structure comprises 82 residues: Immediate early response 3-interacting protein 1 (82 aa).

The next 2 membrane-spanning stretches (helical) occupy residues 2 to 22 (AFTLYSLMQAALLCVNAIAVL) and 62 to 82 (VMRVPLIIVNSITIVLLLLFG).

It belongs to the YOS1 family.

The protein localises to the endoplasmic reticulum membrane. Functionally, regulator of endoplasmic reticulum secretion that acts as a key determinant of brain size. Required for secretion of extracellular matrix proteins. Required for correct brain development by depositing sufficient extracellular matrix proteins for tissue integrity and the proliferation of neural progenitors. Acts as a regulator of the unfolded protein response (UPR). This Mus musculus (Mouse) protein is Immediate early response 3-interacting protein 1.